The sequence spans 553 residues: Zinc finger CCHC domain-containing protein 8 homolog (553 aa).

Ser-59 carries the post-translational modification Phosphoserine. Residues 183 to 200 form a CCHC-type zinc finger; the sequence is SSCFNCGDTEHSLRDCTK. Phosphoserine is present on residues Ser-292 and Ser-347. Tyr-356 is subject to Phosphotyrosine. A disordered region spans residues 388 to 492; that stretch reads LEEETEDPPL…APSTPFKASY (105 aa). The span at 395-409 shows a compositional bias: pro residues; that stretch reads PPLPPSVPPPQPPPP. Phosphoserine occurs at positions 421 and 423. Composition is skewed to polar residues over residues 444 to 456 and 473 to 485; these read ASHN…SKSP and ESGN…SAPS.

This sequence belongs to the ZCCHC8 family.

It is found in the nucleus. The protein localises to the nucleoplasm. Functionally, scaffolding subunit of the trimeric nuclear exosome targeting (NEXT) complex, a complex that directs a subset of non-coding short-lived RNAs for exosomal degradation. The RNA exosome is fundamental for the degradation of RNA in eukaryotic nuclei. May be involved in pre-mRNA splicing. The polypeptide is Zinc finger CCHC domain-containing protein 8 homolog (Drosophila melanogaster (Fruit fly)).